The primary structure comprises 887 residues: Exocyst complex component SEC3A (887 aa).

2 coiled-coil regions span residues 221–248 (IGEA…AILE) and 281–301 (LRHM…LEMQ). The interval 542 to 581 (GAGNDKKSQSNNDDGNDDDDLGIMDIDETDKKPGKNSPDL) is disordered. Residues 555-569 (DGNDDDDLGIMDIDE) are compositionally biased toward acidic residues.

The protein belongs to the SEC3 family. The exocyst complex is composed of SEC3, SEC5, SEC6, SEC8, SEC10, EXO70A1 and EXO84B. Interacts with EXO70A1, SEC5A and ICR1, but not with ICR2. Binds to EXO70H1. Binds directly to B1L. As to expression, widely expressed. Preferentially expressed in tissues containing dividing and expanding cells, such as the shoot apical meristem, root tip, lateral root primordia and developing embryos.

It is found in the cytoplasm. The protein resides in the cytosol. It localises to the cell membrane. The protein localises to the cytoskeleton. Its subcellular location is the phragmoplast. It is found in the secreted. The protein resides in the extracellular exosome. In terms of biological role, component of the exocyst complex involved in the docking of exocytic vesicles with fusion sites on the plasma membrane during regulated or polarized secretion. Involved in polarized cell growth and organ morphogenesis. During cytokinesis, involved in cell plate initiation, cell plate maturation and formation of new primary cell wall. During cytokinesis, involved in cell plate initiation, cell plate maturation and formation of new primary cell wall. This Arabidopsis thaliana (Mouse-ear cress) protein is Exocyst complex component SEC3A.